A 261-amino-acid polypeptide reads, in one-letter code: tRNA pseudouridine synthase A (261 aa).

The Nucleophile role is filled by Asp55. Tyr114 lines the substrate pocket.

It belongs to the tRNA pseudouridine synthase TruA family. In terms of assembly, homodimer.

The enzyme catalyses uridine(38/39/40) in tRNA = pseudouridine(38/39/40) in tRNA. Functionally, formation of pseudouridine at positions 38, 39 and 40 in the anticodon stem and loop of transfer RNAs. This Paracoccus denitrificans (strain Pd 1222) protein is tRNA pseudouridine synthase A.